Consider the following 489-residue polypeptide: Betaine aldehyde dehydrogenase (489 aa).

2 residues coordinate K(+): Thr26 and Asp93. Residue Gly150 to Trp152 coordinates NAD(+). Lys162 acts as the Charge relay system in catalysis. Lys176–Glu179 provides a ligand contact to NAD(+). Val180 is a K(+) binding site. Gly229 to Thr232 is a binding site for NAD(+). Leu245 contributes to the K(+) binding site. The active-site Proton acceptor is the Glu251. NAD(+) contacts are provided by Gly253, Cys285, and Glu386. Residue Cys285 is the Nucleophile of the active site. Cys285 carries the cysteine sulfenic acid (-SOH) modification. K(+)-binding residues include Lys456 and Gly459. Glu463 functions as the Charge relay system in the catalytic mechanism.

This sequence belongs to the aldehyde dehydrogenase family. Dimer of dimers. K(+) serves as cofactor.

It catalyses the reaction betaine aldehyde + NAD(+) + H2O = glycine betaine + NADH + 2 H(+). It functions in the pathway amine and polyamine biosynthesis; betaine biosynthesis via choline pathway; betaine from betaine aldehyde: step 1/1. Functionally, involved in the biosynthesis of the osmoprotectant glycine betaine. Catalyzes the irreversible oxidation of betaine aldehyde to the corresponding acid. This is Betaine aldehyde dehydrogenase from Burkholderia multivorans (strain ATCC 17616 / 249).